The following is a 344-amino-acid chain: Phosphoribosylformylglycinamidine cyclo-ligase (344 aa).

This sequence belongs to the AIR synthase family.

Its subcellular location is the cytoplasm. The catalysed reaction is 2-formamido-N(1)-(5-O-phospho-beta-D-ribosyl)acetamidine + ATP = 5-amino-1-(5-phospho-beta-D-ribosyl)imidazole + ADP + phosphate + H(+). It participates in purine metabolism; IMP biosynthesis via de novo pathway; 5-amino-1-(5-phospho-D-ribosyl)imidazole from N(2)-formyl-N(1)-(5-phospho-D-ribosyl)glycinamide: step 2/2. This is Phosphoribosylformylglycinamidine cyclo-ligase from Synechococcus sp. (strain RCC307).